The following is a 617-amino-acid chain: D-glucuronyl C5-epimerase (617 aa).

Residues 1–11 lie on the Cytoplasmic side of the membrane; that stretch reads MRCLAARVNYK. The chain crosses the membrane as a helical; Signal-anchor for type II membrane protein span at residues 12–28; sequence TLIIICALFTLVTVLLW. At 29 to 617 the chain is on the lumenal side; sequence NKCSSDKAIQ…YLKGSRAKHN (589 aa). Residues Tyr179, 184–186, Gln201, Tyr209, Gln212, and Gln215 each bind substrate; that span reads RDR. Thr237, Glu239, Thr268, Asn269, and Asp392 together coordinate Ca(2+). Residues 429 to 432, 499 to 500, Asn510, Tyr514, Tyr560, Arg563, and 572 to 581 contribute to the substrate site; these read KLGE, EY, and NLARWDYHTT.

It belongs to the D-glucuronyl C5-epimerase family. As to quaternary structure, homodimer. Interacts with HS2ST1.

It is found in the golgi apparatus membrane. It catalyses the reaction [heparosan-N-sulfate](n) = [heparan-N-sulfate](n). The protein operates within glycan metabolism; heparan sulfate biosynthesis. Its pathway is glycan metabolism; heparin biosynthesis. Its function is as follows. Converts D-glucuronic acid residues adjacent to N-sulfate sugar residues to L-iduronic acid residues, both in maturing heparan sulfate (HS) and heparin chains. This is important for further modifications that determine the specificity of interactions between these glycosaminoglycans and proteins. The protein is D-glucuronyl C5-epimerase (GLCE) of Bos taurus (Bovine).